The primary structure comprises 792 residues: Endonuclease MutS2 (792 aa).

Residue 334 to 341 (GPNTGGKT) coordinates ATP. The Smr domain maps to 717–792 (IDLRGMMLSE…ENGVTVVELK (76 aa)).

Belongs to the DNA mismatch repair MutS family. MutS2 subfamily. In terms of assembly, homodimer. Binds to stalled ribosomes, contacting rRNA.

Endonuclease that is involved in the suppression of homologous recombination and thus may have a key role in the control of bacterial genetic diversity. Functionally, acts as a ribosome collision sensor, splitting the ribosome into its 2 subunits. Detects stalled/collided 70S ribosomes which it binds and splits by an ATP-hydrolysis driven conformational change. Acts upstream of the ribosome quality control system (RQC), a ribosome-associated complex that mediates the extraction of incompletely synthesized nascent chains from stalled ribosomes and their subsequent degradation. Probably generates substrates for RQC. The chain is Endonuclease MutS2 from Ruminiclostridium cellulolyticum (strain ATCC 35319 / DSM 5812 / JCM 6584 / H10) (Clostridium cellulolyticum).